The primary structure comprises 109 residues: Protein reprimo (109 aa).

Asparagine 7 and asparagine 18 each carry an N-linked (GlcNAc...) asparagine glycan. The helical transmembrane segment at 56-76 threads the bilayer; it reads VVQIAVMCVLSLTVVFGIFFL. Serine 98 is modified (phosphoserine).

The protein belongs to the reprimo family.

The protein resides in the cytoplasm. Its subcellular location is the membrane. Functionally, may be involved in the regulation of p53-dependent G2 arrest of the cell cycle. Seems to induce cell cycle arrest by inhibiting CDK1 activity and nuclear translocation of the CDC2 cyclin B1 complex. This chain is Protein reprimo (RPRM), found in Homo sapiens (Human).